The sequence spans 509 residues: Poly(A) RNA polymerase GLD2-B (509 aa).

The segment at 88–125 is disordered; that stretch reads PGSPPSSFQNRKRRSDEGNSPYDVKRQRFQSPQEQTVN. The segment covering 116–125 has biased composition (polar residues); the sequence is FQSPQEQTVN. 2 residues coordinate Mg(2+): Asp-240 and Asp-242. Residues 409–462 enclose the PAP-associated domain; that stretch reads LGDLLLGFLKYFAVEFDWSKDIISLREAKALPRTDDYEWRNKYICVEEPFDGSN.

The protein belongs to the DNA polymerase type-B-like family. GLD2 subfamily. Component of a complex at least composed of cpeb1, cpsf1, tent2/gld2, pabpc1/ePAB, parn and sympk. Following oocyte maturation, parn is expelled from the complex. Interacts with rbfox2. Interacts with sympk. Mg(2+) is required as a cofactor. Requires Mn(2+) as cofactor.

The protein resides in the cytoplasm. It catalyses the reaction RNA(n) + ATP = RNA(n)-3'-adenine ribonucleotide + diphosphate. Cytoplasmic poly(A) RNA polymerase that adds successive AMP monomers to the 3'-end of specific RNAs, forming a poly(A) tail. In contrast to the canonical nuclear poly(A) RNA polymerase, it only adds poly(A) to selected cytoplasmic mRNAs during oocyte maturation. Plays a central role during oocyte maturation by mediating polyadenylation of dormant mRNAs, which contain 5'AAUAAA-3' sequence in their 3'-UTR. In immature oocytes, polyadenylation of poly(A) tails is counteracted by the ribonuclease parn. During maturation parn is excluded from the ribonucleoprotein complex, allowing poly(A) elongation and activation of mRNAs. May not play a role in replication-dependent histone mRNA degradation. This Xenopus laevis (African clawed frog) protein is Poly(A) RNA polymerase GLD2-B.